We begin with the raw amino-acid sequence, 156 residues long: Phosphopantetheine adenylyltransferase (156 aa).

T9 is a substrate binding site. ATP-binding positions include 9–10 (TF) and H17. 3 residues coordinate substrate: K41, L73, and R87. ATP contacts are provided by residues 88-90 (GVR), E98, and 123-129 (WAFVSST).

Belongs to the bacterial CoaD family. As to quaternary structure, homohexamer. Mg(2+) serves as cofactor.

The protein resides in the cytoplasm. The enzyme catalyses (R)-4'-phosphopantetheine + ATP + H(+) = 3'-dephospho-CoA + diphosphate. Its pathway is cofactor biosynthesis; coenzyme A biosynthesis; CoA from (R)-pantothenate: step 4/5. Its function is as follows. Reversibly transfers an adenylyl group from ATP to 4'-phosphopantetheine, yielding dephospho-CoA (dPCoA) and pyrophosphate. The sequence is that of Phosphopantetheine adenylyltransferase from Haemophilus influenzae (strain 86-028NP).